We begin with the raw amino-acid sequence, 245 residues long: Putative protein phosphatase 2C-like protein 45 (245 aa).

In terms of domain architecture, PPM-type phosphatase spans 1-188; sequence MEDRFSTITN…DDISVMLIPL (188 aa).

Belongs to the PP2C family.

The protein is Putative protein phosphatase 2C-like protein 45 of Arabidopsis thaliana (Mouse-ear cress).